The sequence spans 415 residues: Squalene synthase 12 (415 aa).

The next 2 helical transmembrane spans lie at 281-301 (AIFR…ALCF) and 391-411 (LIAI…SNLL).

It belongs to the phytoene/squalene synthase family. Requires Mg(2+) as cofactor. Mn(2+) serves as cofactor.

The protein localises to the endoplasmic reticulum membrane. It carries out the reaction 2 (2E,6E)-farnesyl diphosphate + NADH + H(+) = squalene + 2 diphosphate + NAD(+). It catalyses the reaction 2 (2E,6E)-farnesyl diphosphate + NADPH + H(+) = squalene + 2 diphosphate + NADP(+). It functions in the pathway terpene metabolism; lanosterol biosynthesis; lanosterol from farnesyl diphosphate: step 1/3. Functionally, component of the triterpene saponins (e.g. ginsenosides or panaxosides) and phytosterols biosynthetic pathways. Catalyzes the biosynthesis of squalene. This chain is Squalene synthase 12, found in Panax ginseng (Korean ginseng).